A 229-amino-acid chain; its full sequence is Large ribosomal subunit protein uL1 (229 aa).

Belongs to the universal ribosomal protein uL1 family. In terms of assembly, part of the 50S ribosomal subunit.

Functionally, binds directly to 23S rRNA. The L1 stalk is quite mobile in the ribosome, and is involved in E site tRNA release. Its function is as follows. Protein L1 is also a translational repressor protein, it controls the translation of the L11 operon by binding to its mRNA. In Bifidobacterium animalis subsp. lactis (strain AD011), this protein is Large ribosomal subunit protein uL1.